The following is a 347-amino-acid chain: Large ribosomal subunit protein uL3 (347 aa).

This sequence belongs to the universal ribosomal protein uL3 family. In terms of assembly, part of the 50S ribosomal subunit. Forms a cluster with proteins L14 and L24e.

In terms of biological role, one of the primary rRNA binding proteins, it binds directly near the 3'-end of the 23S rRNA, where it nucleates assembly of the 50S subunit. The protein is Large ribosomal subunit protein uL3 of Caldivirga maquilingensis (strain ATCC 700844 / DSM 13496 / JCM 10307 / IC-167).